Reading from the N-terminus, the 143-residue chain is Large ribosomal subunit protein uL15 (143 aa).

Composition is skewed to basic residues over residues 1 to 13 (MIRK…KMRG) and 23 to 38 (KKHR…GNAG). The interval 1 to 38 (MIRKSKKITKMRGSRTCGYGEAKKHRGAGHRGGRGNAG) is disordered.

It belongs to the universal ribosomal protein uL15 family. In terms of assembly, part of the 50S ribosomal subunit.

Its function is as follows. Binds to the 23S rRNA. The sequence is that of Large ribosomal subunit protein uL15 from Methanococcus maripaludis (strain C5 / ATCC BAA-1333).